Reading from the N-terminus, the 690-residue chain is MIYNESLPDNLPSLCSKALLADVPCDRLVRDLRPDFFYRPASLERMCTSGCAAALSSWTSSVRSACGKNVSVPTDFDLLASPVVIPATLEHTFEFTCLRENNKFCGPVAALAAVFTDPGVSPFNYLSEAPEGTTDPGRCDSCIAARLRMRAGSPYFDGPIVASESLYQRLTSSCGITGKPVTTTTIDYSISEPEPTEDSCDGTQYTIQNTDDCYSISKAQGVATAWLLADNGLAAYCADFPTSGSLCIANKCDTVTVGVNQTCIAIANSAGITVTQLKAWNQVINPVCSNIGMMNGTTLCISPPGPRLPLPGTTDIPPLVPTTAAPVPTDAAAGSNKPCSRWYNVEAGDYCNLVILKFAISLDDFLFLNPGINANCTNLYAKESYCVHPVGDINTYAGRPGHVSITIDPNATFTGIPFTMLPNATVKGYSRPYTPAPLAKGVREDCVHYFKGDDYQFPPDQLGYWKSNCELAARNYGADNDNFVAWNALGTNVTDPSCSFVPGGRYCGSWNSQVVRTITETEPATATTGDGGPTPPAPTHSGQPQDCDTWHVVSSGDSCQSVADDAGISRDQFHDWNPAVGRDCSTNFWLGQAYCVGVSEDMGDMSTVASSTTSSVTPGPSKPEPPGPTHTGQPSDCDEWDVVETGDTCGSLAESNDISLSQFFDWNPAVSRDCVANFWIGQAYCIGVSS.

Asparagine 4 and asparagine 69 each carry an N-linked (GlcNAc...) asparagine glycan. 3 consecutive LysM domains span residues 203–248 (TQYT…SLCI), 253–301 (DTVT…TLCI), and 341–387 (RWYN…SYCV). Asparagine 260, asparagine 295, asparagine 375, asparagine 410, asparagine 423, and asparagine 492 each carry an N-linked (GlcNAc...) asparagine glycan. The interval 523–546 (PATATTGDGGPTPPAPTHSGQPQD) is disordered. In terms of domain architecture, LysM 4 spans 549 to 596 (TWHVVSSGDSCQSVADDAGISRDQFHDWNPAVGRDCSTNFWLGQAYCV). Residues 606-619 (STVASSTTSSVTPG) are compositionally biased toward low complexity. Residues 606 to 636 (STVASSTTSSVTPGPSKPEPPGPTHTGQPSD) are disordered. The region spanning 639–686 (EWDVVETGDTCGSLAESNDISLSQFFDWNPAVSRDCVANFWIGQAYCI) is the LysM 5 domain.

This sequence belongs to the secreted LysM effector family.

Functionally, might have a role in sequestration of chitin oligosaccharides (breakdown products of fungal cell walls that are released during invasion and act as triggers of host immunity) to dampen host defense. Does not play an important role during host colonization. This Verticillium dahliae (strain VdLs.17 / ATCC MYA-4575 / FGSC 10137) (Verticillium wilt) protein is Secreted LysM effector Vd5LysM.